Reading from the N-terminus, the 292-residue chain is NAD kinase (292 aa).

D73 functions as the Proton acceptor in the catalytic mechanism. Residues 73 to 74 (DG), 147 to 148 (NE), H158, R175, D177, 188 to 193 (TGYSLS), and Q248 each bind NAD(+).

Belongs to the NAD kinase family. A divalent metal cation is required as a cofactor.

The protein localises to the cytoplasm. The catalysed reaction is NAD(+) + ATP = ADP + NADP(+) + H(+). Involved in the regulation of the intracellular balance of NAD and NADP, and is a key enzyme in the biosynthesis of NADP. Catalyzes specifically the phosphorylation on 2'-hydroxyl of the adenosine moiety of NAD to yield NADP. This Buchnera aphidicola subsp. Baizongia pistaciae (strain Bp) protein is NAD kinase.